The chain runs to 580 residues: MIQQLPMVNVELMISNLRILVESKQFSSAEFLGNFVISVPNQQKTPHQNIISFSLFGDSLFGKNEFVRSLKYFKQSLDILFKVYNNPNNNNNNNNKQADFDNKQFEYELKYKISLCYIKINRNNLAISYLESIPFSSRGLDTHLTIARLYKDIGKEKSKECIISYKEVIKLCPLCLEAINSLKEMGENVDQVLIPSINKFQQKNNSFNSNNIIDLSWISLLSMSQYEMKRNQPEKSLILLKKVESKFSTNLYVLEKLALSYLYHDEPSIINTFNIFQKIRLLDPYYIGSMDIFCSLLKRRSLQFELNKVCNDLVASNPYCAETWTSVALFYFLKENVEKSLENVDRAISIKESHEFAHSLKGEILLSLDEPREALPSLERAFQLSKNILTARELVRCHLILNQMKEALVVAETINNLSPDYSKTMALLGMVLANQPEEREEARKILTKALTLSPHCTDTVLTLSKLNVVEGRFQEAIDILNSQLEYQETDLMHTEIAGVYLTKDYHEDAMIHYNSALEINPQYEPASRGIARLELIMKGIDPDQELDQENDDDDQEEGEGENDQEENDDDDNDDDDEYIS.

TPR repeat units follow at residues 50–83 (IISF…LFKV), 107–140 (YELK…SRGL), 141–175 (DTHL…CPLC), 253–286 (VLEK…DPYY), 321–354 (AETW…KESH), 356–388 (FAHS…SKNI), 390–421 (TARE…SPDY), 422–456 (SKTM…SPHC), 458–490 (DTVL…QETD), and 491–523 (LMHT…NPQY). Positions 539–580 (GIDPDQELDQENDDDDQEEGEGENDQEENDDDDNDDDDEYIS) are disordered. Residues 542 to 580 (PDQELDQENDDDDQEEGEGENDQEENDDDDNDDDDEYIS) show a composition bias toward acidic residues.

Belongs to the APC7 family. As to quaternary structure, the APC/C is composed of at least 13 subunits that stay tightly associated throughout the cell cycle: anapc1, anapc2, anapc3, anapc4, anapc5, anapc6, anapc7, anapc8, anapc10, anapc11, cdc20, cdc26 and cdh1.

It is found in the nucleus. Its pathway is protein modification; protein ubiquitination. In terms of biological role, component of the anaphase promoting complex/cyclosome (APC/C), a cell cycle-regulated E3 ubiquitin-protein ligase complex that controls progression through mitosis and the G1 phase of the cell cycle. This is Anaphase-promoting complex subunit 7 (anapc7) from Dictyostelium discoideum (Social amoeba).